The sequence spans 844 residues: Striatin-interacting proteins 2 (844 aa).

The span at 1-18 (MDDPAAPGPAGSPANDNG) shows a compositional bias: low complexity. A disordered region spans residues 1 to 58 (MDDPAAPGPAGSPANDNGNGNGNGNGNGNGGKGKPAVPKGRETFRNQRRESEGSVDCP). The segment covering 19–33 (NGNGNGNGNGNGGKG) has biased composition (gly residues). The span at 39 to 52 (KGRETFRNQRRESE) shows a compositional bias: basic and acidic residues. A phosphoserine mark is found at serine 328, serine 339, and serine 364. Positions 331–355 (SYTLDLGESQLAPPPSKLRGRRGSR) are disordered. Residues 370–422 (ERDLFKTEEPATEEEEESAADGERTLDGELDLLEQDPLVPPPPSQTPLSTDRV) are disordered. Positions 379-389 (PATEEEEESAA) are enriched in acidic residues.

This sequence belongs to the STRIP family. As to quaternary structure, part of the core of STRIPAK complexes composed of PP2A catalytic and scaffolding subunits, the striatins (PP2A regulatory subunits), the striatin-associated proteins MOB4, STRIP1 and STRIP2, PDCD10 and members of the STE20 kinases, such as STK24 and STK26. Interacts with CTTNBP2NL.

It is found in the cytoplasm. Plays a role in the regulation of cell morphology and cytoskeletal organization. Required in the control of cell shape. Calmodulin-binding scaffolding protein which is the center of the striatin-interacting phosphatase and kinase (STRIPAK) complexes. STRIPAK complexes have critical roles in protein (de)phosphorylation and are regulators of multiple signaling pathways including Hippo, MAPK, nuclear receptor and cytoskeleton remodeling. Different types of STRIPAK complexes are involved in a variety of biological processes such as cell growth, differentiation, apoptosis, metabolism and immune regulation. The chain is Striatin-interacting proteins 2 (Strip2) from Mus musculus (Mouse).